A 389-amino-acid polypeptide reads, in one-letter code: Succinate--CoA ligase [ADP-forming] subunit beta (389 aa).

In terms of domain architecture, ATP-grasp spans 9 to 236 (KELFAKHEVP…KDATDPLELK (228 aa)). ATP-binding positions include lysine 45, 52 to 54 (GRG), serine 94, and glutamate 99. Residues asparagine 191 and aspartate 205 each coordinate Mg(2+). Substrate-binding positions include asparagine 256 and 318–320 (GIT).

It belongs to the succinate/malate CoA ligase beta subunit family. As to quaternary structure, heterotetramer of two alpha and two beta subunits. Mg(2+) serves as cofactor.

It catalyses the reaction succinate + ATP + CoA = succinyl-CoA + ADP + phosphate. It carries out the reaction GTP + succinate + CoA = succinyl-CoA + GDP + phosphate. The protein operates within carbohydrate metabolism; tricarboxylic acid cycle; succinate from succinyl-CoA (ligase route): step 1/1. Its function is as follows. Succinyl-CoA synthetase functions in the citric acid cycle (TCA), coupling the hydrolysis of succinyl-CoA to the synthesis of either ATP or GTP and thus represents the only step of substrate-level phosphorylation in the TCA. The beta subunit provides nucleotide specificity of the enzyme and binds the substrate succinate, while the binding sites for coenzyme A and phosphate are found in the alpha subunit. The polypeptide is Succinate--CoA ligase [ADP-forming] subunit beta (Rhodococcus jostii (strain RHA1)).